A 120-amino-acid chain; its full sequence is Large ribosomal subunit protein bL12 (120 aa).

The protein belongs to the bacterial ribosomal protein bL12 family. As to quaternary structure, homodimer. Part of the ribosomal stalk of the 50S ribosomal subunit. Forms a multimeric L10(L12)X complex, where L10 forms an elongated spine to which 2 to 4 L12 dimers bind in a sequential fashion. Binds GTP-bound translation factors.

Forms part of the ribosomal stalk which helps the ribosome interact with GTP-bound translation factors. Is thus essential for accurate translation. This chain is Large ribosomal subunit protein bL12, found in Brevibacillus brevis (strain 47 / JCM 6285 / NBRC 100599).